A 101-amino-acid chain; its full sequence is uncharacterized protein (101 aa).

A helical transmembrane segment spans residues 77-99 (VFSFMNGFTDGCICGTIIILCLI).

It localises to the membrane. This is an uncharacterized protein from Acanthamoeba polyphaga mimivirus (APMV).